The chain runs to 378 residues: Mannitol-1-phosphate 5-dehydrogenase (378 aa).

4 to 15 serves as a coordination point for NAD(+); the sequence is SVHFGAGNIGRG.

Belongs to the mannitol dehydrogenase family.

It catalyses the reaction D-mannitol 1-phosphate + NAD(+) = beta-D-fructose 6-phosphate + NADH + H(+). This Streptococcus pneumoniae (strain Hungary19A-6) protein is Mannitol-1-phosphate 5-dehydrogenase.